The sequence spans 65 residues: Large ribosomal subunit protein bL35 (65 aa).

The protein belongs to the bacterial ribosomal protein bL35 family.

This Chromobacterium violaceum (strain ATCC 12472 / DSM 30191 / JCM 1249 / CCUG 213 / NBRC 12614 / NCIMB 9131 / NCTC 9757 / MK) protein is Large ribosomal subunit protein bL35.